Reading from the N-terminus, the 91-residue chain is Small ribosomal subunit protein uS19 (91 aa).

The protein belongs to the universal ribosomal protein uS19 family.

Functionally, protein S19 forms a complex with S13 that binds strongly to the 16S ribosomal RNA. The sequence is that of Small ribosomal subunit protein uS19 from Cupriavidus pinatubonensis (strain JMP 134 / LMG 1197) (Cupriavidus necator (strain JMP 134)).